Here is a 393-residue protein sequence, read N- to C-terminus: 4-hydroxyphenylpyruvate dioxygenase (393 aa).

Residue threonine 2 is modified to N-acetylthreonine. VOC domains follow at residues 18 to 149 (HFHS…LVEK) and 180 to 338 (IIDH…IFTK). Lysine 132 carries the N6-succinyllysine modification. Histidine 183 provides a ligand contact to Fe cation. Residues serine 211, serine 226, and serine 250 each carry the phosphoserine modification. Fe cation contacts are provided by histidine 266 and glutamate 349.

This sequence belongs to the 4HPPD family. In terms of assembly, homodimer. Fe cation serves as cofactor.

It is found in the cytoplasm. Its subcellular location is the endoplasmic reticulum membrane. It localises to the golgi apparatus membrane. The enzyme catalyses 3-(4-hydroxyphenyl)pyruvate + O2 = homogentisate + CO2. It functions in the pathway amino-acid degradation; L-phenylalanine degradation; acetoacetate and fumarate from L-phenylalanine: step 3/6. Its function is as follows. Catalyzes the conversion of 4-hydroxyphenylpyruvic acid to homogentisic acid, one of the steps in tyrosine catabolism. The protein is 4-hydroxyphenylpyruvate dioxygenase (Hpd) of Rattus norvegicus (Rat).